Reading from the N-terminus, the 348-residue chain is MIEIDGSYGEGGGQVLRTSLSLAAITGEPIRIAGIRAGRKKPGLAAQHLTAVRAAGRICNAQLRGDALGSMLLEFIPGSAVQAGIYTFDVSKAQEGGSAGAIALVLQTILLPLALATGNSQVTLKGGTHVNFSPTVTYIEQVYLPILQRMGVEAQVKLGAWGWFPQGGGEIELQVIGGTQLGGINLLERGELQQVRGIAAVTELPSHIPQRMANRAENLLREAHLKVRVQTLREKGVAPGAGIFLTAEYQNSLTGFGGFGRLRLSAETVAEIACQQLLEFHYTGAAVDEHLADQLLLPATLASQESQYQVAEVSRHLITNAAVIEQFGLAQIRVNEADKIVSVKSLTS.

ATP contacts are provided by residues Gln-107 and 290–294 (HLADQ). The active-site Tele-AMP-histidine intermediate is His-316.

It belongs to the RNA 3'-terminal cyclase family. Type 1 subfamily.

It is found in the cytoplasm. The catalysed reaction is a 3'-end 3'-phospho-ribonucleotide-RNA + ATP = a 3'-end 2',3'-cyclophospho-ribonucleotide-RNA + AMP + diphosphate. Catalyzes the conversion of 3'-phosphate to a 2',3'-cyclic phosphodiester at the end of RNA. The mechanism of action of the enzyme occurs in 3 steps: (A) adenylation of the enzyme by ATP; (B) transfer of adenylate to an RNA-N3'P to produce RNA-N3'PP5'A; (C) and attack of the adjacent 2'-hydroxyl on the 3'-phosphorus in the diester linkage to produce the cyclic end product. The biological role of this enzyme is unknown but it is likely to function in some aspects of cellular RNA processing. This Nostoc punctiforme (strain ATCC 29133 / PCC 73102) protein is RNA 3'-terminal phosphate cyclase.